Here is a 618-residue protein sequence, read N- to C-terminus: Origin recognition complex subunit 2 (618 aa).

2 disordered regions span residues 1-116 (MSAS…AAKD) and 149-274 (NATP…KKSN). Position 24 is a phosphothreonine (Thr-24). 2 positions are modified to phosphoserine: Ser-26 and Ser-30. The segment covering 49–59 (TSRRSTRRPSP) has biased composition (basic residues). Positions 70 to 79 (SNGKGQEERI) are enriched in basic and acidic residues. A phosphoserine mark is found at Ser-87, Ser-91, and Ser-92. Residues 94-107 (AEDQEEEESIEESE) show a composition bias toward acidic residues. A phosphothreonine mark is found at Thr-151, Thr-154, Thr-157, Thr-160, Thr-167, Thr-170, and Thr-181. Positions 151–161 (TPCTPKTPKTP) are enriched in low complexity. Basic residues predominate over residues 183 to 193 (AHVRTRVKKQI). A compositionally biased stretch (acidic residues) spans 199–208 (DSDEDFSGDE). Low complexity predominate over residues 219 to 233 (SSSSSSSDAGNSSDN). A Phosphothreonine modification is found at Thr-258. Phosphoserine is present on Ser-260.

It belongs to the ORC2 family. As to quaternary structure, ORC is composed of six subunits. Interacts with Mcm10. Interacts with CG9890. Interaction between the TREX-2/AMEX complex and the ORC complex is required for ORC localization to mRNPs, and consequently mRNA export.

It localises to the nucleus. It is found in the chromosome. Its subcellular location is the centromere. Component of the origin recognition complex (ORC) that binds origins of replication. DNA-binding is ATP-dependent, however specific DNA sequences that define origins of replication have not been identified so far. ORC is required to assemble the pre-replication complex necessary to initiate DNA replication. As part of the ORC complex, might also have a role in mRNA export. The polypeptide is Origin recognition complex subunit 2 (Orc2) (Drosophila melanogaster (Fruit fly)).